Consider the following 253-residue polypeptide: MATNNGDVLMLEATPEAARPWASAANAEVIDALPYIDDDYGNPLIKSEVDRLVEEEMRRSSKKPADFLKDLPPLPKFDFKNCPVLGKEYERVRAGKPPVRIDFESRYKLEMPPANKRNDDAAWKQYLQKNQRSLQQKLIELENLELMSKLGPELWRQNNHRLEVFLTRMQRLAQEQNEEIEKVNRERKYHQQTTSYELNALSQEWRQLCVKNMEIQSACAMLETQIDSFKKEAAERGWNLEEKLENVEPLQMQ.

The stretch at 124–235 (KQYLQKNQRS…IDSFKKEAAE (112 aa)) forms a coiled coil.

It belongs to the SPF27 family. In terms of assembly, component of the multiprotein assembly MOS4-associated complex (MAC) at least composed of MOS4, CDC5 and PRL1. Interacts with CYCL1-1 and CDC5. Associated with the spliceosome. Interacts with ENY2.

It is found in the nucleus. Functionally, component of the MAC complex that probably regulates defense responses through transcriptional control and thereby is essential for plant innate immunity. Involved in mRNA splicing. This is Pre-mRNA-splicing factor SPF27 homolog (MOS4) from Arabidopsis thaliana (Mouse-ear cress).